Reading from the N-terminus, the 362-residue chain is Myricetin 3'-O-methyltransferase 4 (362 aa).

Asp229 is an S-adenosyl-L-methionine binding site. The active-site Proton acceptor is the His267.

The protein belongs to the class I-like SAM-binding methyltransferase superfamily. Cation-independent O-methyltransferase family. As to quaternary structure, homodimer. Mainly expressed in stem and petiole trichomes.

The catalysed reaction is myricetin + S-adenosyl-L-methionine = laricitrin + S-adenosyl-L-homocysteine + H(+). Its pathway is flavonoid metabolism. Flavonoid 3'-O-methyltransferase involved in the biosynthesis of polymethoxylated flavonoids natural products such as myricetin derivatives, aroma compounds possessing antioxidant properties and exhibiting pharmacological activities such as anti-carcinogen, anti-viral, anti-thrombotic, anti-diabetic, anti-atherosclerotic, and anti-inflammatory effects. Catalyzes S-adenosylmethionine-dependent regioselective 3'-O-methylation of flavonoids; active on various hydroxylated flavonoid substrates, including myricetin, thus producing 3'-methyl myricetin (laricitrin). The protein is Myricetin 3'-O-methyltransferase 4 of Solanum lycopersicum (Tomato).